The following is a 362-amino-acid chain: sn-glycerol-3-phosphate import ATP-binding protein UgpC (362 aa).

Residues 4–235 (LSFRNVKKTY…PASTFVAGFI (232 aa)) form the ABC transporter domain. 37–44 (GPSGCGKS) is a binding site for ATP.

Belongs to the ABC transporter superfamily. sn-glycerol-3-phosphate importer (TC 3.A.1.1.3) family. The complex is composed of two ATP-binding proteins (UgpC), two transmembrane proteins (UgpA and UgpE) and a solute-binding protein (UgpB).

Its subcellular location is the cell inner membrane. It catalyses the reaction sn-glycerol 3-phosphate(out) + ATP + H2O = sn-glycerol 3-phosphate(in) + ADP + phosphate + H(+). Part of the ABC transporter complex UgpBAEC involved in sn-glycerol-3-phosphate (G3P) import. Responsible for energy coupling to the transport system. The protein is sn-glycerol-3-phosphate import ATP-binding protein UgpC of Bordetella pertussis (strain Tohama I / ATCC BAA-589 / NCTC 13251).